Consider the following 39-residue polypeptide: Contryphan-Cal4 (39 aa).

The first 20 residues, methionine 1–serine 20, serve as a signal peptide directing secretion. A disulfide bridge links cysteine 29 with cysteine 35.

Expressed by the venom duct.

Its subcellular location is the secreted. In terms of biological role, probable neurotoxin. In Californiconus californicus (California cone), this protein is Contryphan-Cal4.